The chain runs to 255 residues: MFSASTTPEQPLGLSGDATPPLPTSVPLDWAAFRRAFLIDDAWRPLLEPELANPLTARLLAEYDRRCQTEEVLPPREDVFSWTRYCTPDDVRVVIIGQDPYHHPGQAHGLAFSVRADVPVPPSLRNVLAAVKNCYPDARMSGRGCLEKWARDGVLLLNTTLTVKRGAAASHSKLGWDRFVGGVVQRLAARRPGLVFMLWGAHAQNAIRPDPRQHYVLKFSHPSPLSKVPFGTCQHFLAANRYLETRDIMPIDWSV.

The segment at 1–20 (MFSASTTPEQPLGLSGDATP) is disordered. Asp-99 serves as the catalytic Proton acceptor.

This sequence belongs to the uracil-DNA glycosylase (UDG) superfamily. UNG family.

The protein localises to the host nucleus. The enzyme catalyses Hydrolyzes single-stranded DNA or mismatched double-stranded DNA and polynucleotides, releasing free uracil.. In terms of biological role, excises uracil residues from the DNA which can arise as a result of misincorporation of dUMP residues by DNA polymerase or deamination of cytosines. Therefore may reduce deleterious uracil incorporation into the viral genome, particularly in terminally differentiated cells which lack DNA repair enzymes. The chain is Uracil-DNA glycosylase from Human herpesvirus 2 (strain HG52) (HHV-2).